We begin with the raw amino-acid sequence, 301 residues long: Nucleotide-binding protein Helmi_06460 (301 aa).

17-24 (GLSGAGKS) contributes to the ATP binding site. A GTP-binding site is contributed by 68 to 71 (DIRG).

It belongs to the RapZ-like family.

Displays ATPase and GTPase activities. The polypeptide is Nucleotide-binding protein Helmi_06460 (Heliobacterium modesticaldum (strain ATCC 51547 / Ice1)).